The following is a 239-amino-acid chain: Ribonuclease PH (239 aa).

Phosphate is bound by residues R86 and 124–126 (GTR).

It belongs to the RNase PH family. In terms of assembly, homohexameric ring arranged as a trimer of dimers.

The catalysed reaction is tRNA(n+1) + phosphate = tRNA(n) + a ribonucleoside 5'-diphosphate. Its function is as follows. Phosphorolytic 3'-5' exoribonuclease that plays an important role in tRNA 3'-end maturation. Removes nucleotide residues following the 3'-CCA terminus of tRNAs; can also add nucleotides to the ends of RNA molecules by using nucleoside diphosphates as substrates, but this may not be physiologically important. Probably plays a role in initiation of 16S rRNA degradation (leading to ribosome degradation) during starvation. This chain is Ribonuclease PH, found in Rhizobium etli (strain ATCC 51251 / DSM 11541 / JCM 21823 / NBRC 15573 / CFN 42).